A 103-amino-acid polypeptide reads, in one-letter code: Small ribosomal subunit protein uS10 (103 aa).

The protein belongs to the universal ribosomal protein uS10 family. As to quaternary structure, part of the 30S ribosomal subunit.

In terms of biological role, involved in the binding of tRNA to the ribosomes. In Pseudomonas aeruginosa (strain LESB58), this protein is Small ribosomal subunit protein uS10.